The chain runs to 107 residues: Replication initiation control protein YabA (107 aa).

Residues H81, C83, C97, and C100 each coordinate Zn(2+).

Belongs to the YabA family. As to quaternary structure, homotetramer. Interacts with both DnaA and DnaN, acting as a bridge between these two proteins. It depends on Zn(2+) as a cofactor.

The protein localises to the cytoplasm. It localises to the nucleoid. In terms of biological role, involved in control of chromosome replication initiation. Inhibits the cooperative binding of DnaA to the oriC region, thus negatively regulating initiation of chromosome replication. Inhibits the ability of DnaA-ATP to form a helix on DNA; does not disassemble preformed DnaA-DNA helices. Decreases the residence time of DnaA on the chromosome at its binding sites (oriC, replication forks and promoter-binding sites). Tethers DnaA to the replication machinery via the DNA polymerase beta sliding clamp subunit (dnaN). Associates with oriC and other DnaA targets on the chromosome in a DnaA-dependent manner. The sequence is that of Replication initiation control protein YabA from Streptococcus pyogenes serotype M1.